Reading from the N-terminus, the 63-residue chain is Large ribosomal subunit protein bL28 (63 aa).

Positions 1 to 20 are disordered; sequence MSRRCAITGKGPMVGNNVSH.

This sequence belongs to the bacterial ribosomal protein bL28 family.

This is Large ribosomal subunit protein bL28 from Campylobacter curvus (strain 525.92).